Here is a 325-residue protein sequence, read N- to C-terminus: Cytochrome c1, heme protein, mitochondrial (325 aa).

A mitochondrion-targeting transit peptide spans 1-84 (MAAAAASLRG…AMALHSAVSA (84 aa)). Residues 85 to 281 (SDLELHPPSY…TFLRWASEPE (197 aa)) lie on the Mitochondrial intermembrane side of the membrane. One can recognise a Cytochrome c domain in the interval 108-209 (TSIRRGFQVY…IVRARHGGED (102 aa)). 3 residues coordinate heme c: cysteine 121, cysteine 124, and histidine 125. Serine 182 carries the phosphoserine modification. Methionine 244 is a heme c binding site. A helical transmembrane segment spans residues 282-315 (HDHRKRMGLKMLMMMALLVPLVYTIKRHKWSVLK). Residues 316-325 (SRKLAYRPPK) are Mitochondrial matrix-facing.

This sequence belongs to the cytochrome c family. As to quaternary structure, component of the ubiquinol-cytochrome c oxidoreductase (cytochrome b-c1 complex, complex III, CIII), a multisubunit enzyme composed of 11 subunits. The complex is composed of 3 respiratory subunits cytochrome b, cytochrome c1 and Rieske protein UQCRFS1, 2 core protein subunits UQCRC1/QCR1 and UQCRC2/QCR2, and 6 low-molecular weight protein subunits UQCRH/QCR6, UQCRB/QCR7, UQCRQ/QCR8, UQCR10/QCR9, UQCR11/QCR10 and subunit 9, the cleavage product of Rieske protein UQCRFS1. The complex exists as an obligatory dimer and forms supercomplexes (SCs) in the inner mitochondrial membrane with NADH-ubiquinone oxidoreductase (complex I, CI) and cytochrome c oxidase (complex IV, CIV), resulting in different assemblies (supercomplex SCI(1)III(2)IV(1) and megacomplex MCI(2)III(2)IV(2)). Interacts with FLVCR2; this interaction occurs in the absence of heme and is disrupted upon heme binding. Requires heme c as cofactor.

The protein localises to the mitochondrion inner membrane. The catalysed reaction is a quinol + 2 Fe(III)-[cytochrome c](out) = a quinone + 2 Fe(II)-[cytochrome c](out) + 2 H(+)(out). Component of the ubiquinol-cytochrome c oxidoreductase, a multisubunit transmembrane complex that is part of the mitochondrial electron transport chain which drives oxidative phosphorylation. The respiratory chain contains 3 multisubunit complexes succinate dehydrogenase (complex II, CII), ubiquinol-cytochrome c oxidoreductase (cytochrome b-c1 complex, complex III, CIII) and cytochrome c oxidase (complex IV, CIV), that cooperate to transfer electrons derived from NADH and succinate to molecular oxygen, creating an electrochemical gradient over the inner membrane that drives transmembrane transport and the ATP synthase. The cytochrome b-c1 complex catalyzes electron transfer from ubiquinol to cytochrome c, linking this redox reaction to translocation of protons across the mitochondrial inner membrane, with protons being carried across the membrane as hydrogens on the quinol. In the process called Q cycle, 2 protons are consumed from the matrix, 4 protons are released into the intermembrane space and 2 electrons are passed to cytochrome c. Cytochrome c1 is a catalytic core subunit containing a c-type heme. It transfers electrons from the [2Fe-2S] iron-sulfur cluster of the Rieske protein to cytochrome c. The polypeptide is Cytochrome c1, heme protein, mitochondrial (CYC1) (Homo sapiens (Human)).